The primary structure comprises 121 residues: Large ribosomal subunit protein eL18 (121 aa).

Belongs to the eukaryotic ribosomal protein eL18 family.

In Methanoregula boonei (strain DSM 21154 / JCM 14090 / 6A8), this protein is Large ribosomal subunit protein eL18.